Here is a 437-residue protein sequence, read N- to C-terminus: ATP-dependent protease ATPase subunit HslU (437 aa).

Residues V18, 60–65, D250, E315, and R387 each bind ATP; that span reads GVGKTE.

It belongs to the ClpX chaperone family. HslU subfamily. A double ring-shaped homohexamer of HslV is capped on each side by a ring-shaped HslU homohexamer. The assembly of the HslU/HslV complex is dependent on binding of ATP.

It is found in the cytoplasm. Functionally, ATPase subunit of a proteasome-like degradation complex; this subunit has chaperone activity. The binding of ATP and its subsequent hydrolysis by HslU are essential for unfolding of protein substrates subsequently hydrolyzed by HslV. HslU recognizes the N-terminal part of its protein substrates and unfolds these before they are guided to HslV for hydrolysis. This is ATP-dependent protease ATPase subunit HslU from Desulfovibrio desulfuricans (strain ATCC 27774 / DSM 6949 / MB).